The chain runs to 226 residues: Protein YOP1 homolog (226 aa).

The segment at 1-25 (MRMSKLYKNKEKENEKPSNEPPIKQ) is disordered. The Cytoplasmic segment spans residues 1–72 (MRMSKLYKNK…IEFGYKLGIK (72 aa)). A compositionally biased stretch (basic and acidic residues) spans 8–18 (KNKEKENEKPS). A helical membrane pass occupies residues 73-92 (PSYIVVFGGSALFISLVLGW). The Lumenal portion of the chain corresponds to 93–94 (GA). A helical membrane pass occupies residues 95–113 (ALICNLVGFAYPAYQSFKA). At 114 to 123 (VESQGHAETK) the chain is on the cytoplasmic side. Residues 124–140 (LWLTYWVVFSLFFFIEY) traverse the membrane as a helical segment. Residues 141-143 (LID) lie on the Lumenal side of the membrane. A helical transmembrane segment spans residues 144-162 (IILFWIPFYYVIKLLFLLY). Residues 163-226 (LYMPQVRGAE…VQEGVRRRNV (64 aa)) are Cytoplasmic-facing.

The protein belongs to the DP1 family. As to quaternary structure, may form oligomers.

It is found in the endoplasmic reticulum membrane. Required to generate and maintain the structure of the tubular endoplasmic reticulum network and the digestive (food) vacuole. Induces high curvature in membranes and causes membrane tubule formation. The sequence is that of Protein YOP1 homolog from Plasmodium berghei (strain Anka).